We begin with the raw amino-acid sequence, 215 residues long: UPF0502 protein Shew_1617 (215 aa).

Belongs to the UPF0502 family.

This chain is UPF0502 protein Shew_1617, found in Shewanella loihica (strain ATCC BAA-1088 / PV-4).